Reading from the N-terminus, the 472-residue chain is Flotillin-like protein 6 (472 aa).

Residue cysteine 37 is the site of S-palmitoyl cysteine attachment. Residues 237–327 (ENQREAEVAQ…ELYKKQKEAE (91 aa)) are a coiled coil.

Belongs to the band 7/mec-2 family. Flotillin subfamily. May be palmitoylated. As to expression, very low occasional expression in roots and nodules.

The protein resides in the cell membrane. The protein localises to the membrane. It localises to the caveola. Functionally, may act as a scaffolding protein within caveolar membranes, functionally participating in formation of caveolae or caveolae-like vesicles. May be involved in nodule formation. The polypeptide is Flotillin-like protein 6 (FLOT6) (Medicago truncatula (Barrel medic)).